A 331-amino-acid chain; its full sequence is D-galactose/methyl-galactoside binding periplasmic protein MglB (331 aa).

Residues 1-24 (MKKTAVLSTVAFAIALGSASASFA) form the signal peptide. Residues Asp-38 and Asn-115 each contribute to the beta-D-galactose site. Residues Asp-38 and Asn-115 each contribute to the beta-D-glucose site. Ca(2+) is bound by residues Asp-158, Asn-160, Asp-162, Lys-164, and Gln-166. His-176, Asp-178, and Arg-182 together coordinate beta-D-galactose. His-176, Asp-178, and Arg-182 together coordinate beta-D-glucose. Glu-229 is a binding site for Ca(2+). The beta-D-galactose site is built by Asn-235, Asp-259, and Asn-279. Residues Asn-235, Asp-259, and Asn-279 each coordinate beta-D-glucose.

Belongs to the bacterial solute-binding protein 2 family. As to quaternary structure, the ABC transporter complex is composed of one ATP-binding protein (MglA), two transmembrane proteins (MglC) and a solute-binding protein (MglB).

Its subcellular location is the periplasm. Part of the ABC transporter complex MglABC involved in galactose/methyl galactoside import. This Haemophilus influenzae (strain ATCC 51907 / DSM 11121 / KW20 / Rd) protein is D-galactose/methyl-galactoside binding periplasmic protein MglB (mglB).